Consider the following 345-residue polypeptide: Uroporphyrinogen decarboxylase (345 aa).

Residues 27-31, Phe-46, Asp-76, Tyr-152, Ser-207, and His-320 each bind substrate; that span reads RQAGR.

This sequence belongs to the uroporphyrinogen decarboxylase family. As to quaternary structure, homodimer.

It localises to the cytoplasm. It catalyses the reaction uroporphyrinogen III + 4 H(+) = coproporphyrinogen III + 4 CO2. Its pathway is porphyrin-containing compound metabolism; protoporphyrin-IX biosynthesis; coproporphyrinogen-III from 5-aminolevulinate: step 4/4. In terms of biological role, catalyzes the decarboxylation of four acetate groups of uroporphyrinogen-III to yield coproporphyrinogen-III. The sequence is that of Uroporphyrinogen decarboxylase from Geobacillus thermodenitrificans (strain NG80-2).